We begin with the raw amino-acid sequence, 847 residues long: Leucine--tRNA ligase (847 aa).

A 'HIGH' region motif is present at residues 39-49 (PYPSGALHMGH). The short motif at 613 to 617 (KMSKS) is the 'KMSKS' region element. Residue Lys-616 participates in ATP binding.

This sequence belongs to the class-I aminoacyl-tRNA synthetase family.

Its subcellular location is the cytoplasm. It catalyses the reaction tRNA(Leu) + L-leucine + ATP = L-leucyl-tRNA(Leu) + AMP + diphosphate. In Gloeobacter violaceus (strain ATCC 29082 / PCC 7421), this protein is Leucine--tRNA ligase.